The chain runs to 104 residues: Large ribosomal subunit protein uL23 (104 aa).

It belongs to the universal ribosomal protein uL23 family. As to quaternary structure, part of the 50S ribosomal subunit. Contacts protein L29, and trigger factor when it is bound to the ribosome.

Functionally, one of the early assembly proteins it binds 23S rRNA. One of the proteins that surrounds the polypeptide exit tunnel on the outside of the ribosome. Forms the main docking site for trigger factor binding to the ribosome. The polypeptide is Large ribosomal subunit protein uL23 (Polynucleobacter necessarius subsp. necessarius (strain STIR1)).